Reading from the N-terminus, the 153-residue chain is Nascent polypeptide-associated complex subunit beta (153 aa).

Disordered stretches follow at residues 1–40 (MSDV…ADDK) and 126–153 (LQKE…PKVE). Residues 23–32 (TPRRKVKRAP) show a composition bias toward basic residues. The NAC-A/B domain occupies 36-101 (GADDKKLQLA…GEDKELTELV (66 aa)). Positions 132–147 (EDDDEIPDLVEGENFE) are enriched in acidic residues.

It belongs to the NAC-beta family. In terms of assembly, part of the nascent polypeptide-associated complex (NAC), consisting of EGD2 and EGD1. NAC associates with ribosomes via EGD1.

It is found in the cytoplasm. The protein resides in the nucleus. Component of the nascent polypeptide-associated complex (NAC), a dynamic component of the ribosomal exit tunnel, protecting the emerging polypeptides from interaction with other cytoplasmic proteins to ensure appropriate nascent protein targeting. The NAC complex also promotes mitochondrial protein import by enhancing productive ribosome interactions with the outer mitochondrial membrane and blocks the inappropriate interaction of ribosomes translating non-secretory nascent polypeptides with translocation sites in the membrane of the endoplasmic reticulum. EGD1 may act as a transcription factor that exert a negative effect on the expression of several genes that are transcribed by RNA polymerase II. The sequence is that of Nascent polypeptide-associated complex subunit beta (EGD1) from Gibberella zeae (strain ATCC MYA-4620 / CBS 123657 / FGSC 9075 / NRRL 31084 / PH-1) (Wheat head blight fungus).